The chain runs to 327 residues: Interleukin-12 subunit beta (327 aa).

The N-terminal stretch at 1-22 (MHPQQLVVSWFSLVLLASPIVA) is a signal peptide. The Ig-like C2-type domain maps to 23–106 (IWELEKNVYV…LSRSLLLLHK (84 aa)). An intrachain disulfide couples C50 to C90. The N-linked (GlcNAc...) asparagine glycan is linked to N223. Positions 238-327 (PPKNLQLRPL…WSEWASVSCS (90 aa)) constitute a Fibronectin type-III domain.

This sequence belongs to the IL-12B family. In terms of assembly, heterodimer with IL12A; disulfide-linked. The heterodimer is known as interleukin IL-12. Heterodimer with IL23A; disulfide-linked. The heterodimer is known as interleukin IL-23. Also secreted as a monomer. Interacts with NBR1; this interaction promotes IL-12 secretion.

Its subcellular location is the secreted. Functionally, cytokine that can act as a growth factor for activated T and NK cells, enhance the lytic activity of NK/lymphokine-activated killer cells, and stimulate the production of IFN-gamma by resting PBMC. In terms of biological role, associates with IL23A to form the IL-23 interleukin, a heterodimeric cytokine which functions in innate and adaptive immunity. IL-23 may constitute with IL-17 an acute response to infection in peripheral tissues. IL-23 binds to a heterodimeric receptor complex composed of IL12RB1 and IL23R, activates the Jak-Stat signaling cascade, stimulates memory rather than naive T-cells and promotes production of pro-inflammatory cytokines. IL-23 induces autoimmune inflammation and thus may be responsible for autoimmune inflammatory diseases and may be important for tumorigenesis. This chain is Interleukin-12 subunit beta (IL12B), found in Capra hircus (Goat).